Consider the following 400-residue polypeptide: CCA-adding enzyme (400 aa).

ATP is bound by residues glycine 28 and arginine 31. 2 residues coordinate CTP: glycine 28 and arginine 31. 2 residues coordinate Mg(2+): aspartate 41 and aspartate 43. Residues arginine 112, aspartate 155, arginine 158, arginine 161, and arginine 164 each contribute to the ATP site. CTP is bound by residues arginine 112, aspartate 155, arginine 158, arginine 161, and arginine 164.

The protein belongs to the tRNA nucleotidyltransferase/poly(A) polymerase family. Bacterial CCA-adding enzyme type 3 subfamily. As to quaternary structure, homodimer. Mg(2+) is required as a cofactor.

The catalysed reaction is a tRNA precursor + 2 CTP + ATP = a tRNA with a 3' CCA end + 3 diphosphate. It catalyses the reaction a tRNA with a 3' CCA end + 2 CTP + ATP = a tRNA with a 3' CCACCA end + 3 diphosphate. Catalyzes the addition and repair of the essential 3'-terminal CCA sequence in tRNAs without using a nucleic acid template. Adds these three nucleotides in the order of C, C, and A to the tRNA nucleotide-73, using CTP and ATP as substrates and producing inorganic pyrophosphate. tRNA 3'-terminal CCA addition is required both for tRNA processing and repair. Also involved in tRNA surveillance by mediating tandem CCA addition to generate a CCACCA at the 3' terminus of unstable tRNAs. While stable tRNAs receive only 3'-terminal CCA, unstable tRNAs are marked with CCACCA and rapidly degraded. The polypeptide is CCA-adding enzyme (Staphylococcus haemolyticus (strain JCSC1435)).